The chain runs to 205 residues: uncharacterized protein (205 aa).

Positions 10 to 75 (QDLLSAVDQQ…AANLMTVMTD (66 aa)) form a coiled coil. A disordered region spans residues 108 to 141 (MPLPSSNTNNDQTSPPASGKTSETPKKNPTNAMF). Residues 111–141 (PSSNTNNDQTSPPASGKTSETPKKNPTNAMF) show a composition bias toward polar residues.

It belongs to the asfivirus K205R family.

The protein resides in the host cytoplasm. Functionally, induces host endoplasmic reticulum stress and consequently activates autophagy and NF-kappa-B signaling pathway. In turn, may induce autophagy-mediated STING1 degradation and innate immune evasion. This is an uncharacterized protein from Ornithodoros (relapsing fever ticks).